Reading from the N-terminus, the 271-residue chain is Transmembrane protein 150A (271 aa).

Residues Met1–Thr2 are Cytoplasmic-facing. Residues Ala3–Tyr23 form a helical membrane-spanning segment. Residues Ala24–Glu75 are Extracellular-facing. N-linked (GlcNAc...) asparagine glycosylation is found at Asn37 and Asn41. The helical transmembrane segment at Ser76–Leu96 threads the bilayer. Residues Arg97–Ser108 lie on the Cytoplasmic side of the membrane. Residues Trp109–Gly129 form a helical membrane-spanning segment. Residues Asn130–His140 lie on the Extracellular side of the membrane. Residues Tyr141–Leu161 form a helical membrane-spanning segment. Residues Ser162–Arg178 are Cytoplasmic-facing. Residues Ser179–Glu199 form a helical membrane-spanning segment. The Extracellular portion of the chain corresponds to Ser200–Glu211. A helical membrane pass occupies residues Trp212–Val232. Residues Ser233–Ile271 lie on the Cytoplasmic side of the membrane.

It belongs to the DRAM/TMEM150 family. In terms of assembly, interacts (via C-terminal cytoplasmic tail) with PI4KA.

The protein localises to the cell membrane. Functionally, regulates localization of phosphatidylinositol 4-kinase (PI4K) to the plasma membrane, possibly by reducing the association of TTC7 (TTC7A or TTC7B) with the PI4K complex. Acts as a regulator of phosphatidylinositol 4-phosphate (PtdIns(4)P) synthesis. May also play a role in fasting-induced catabolism. In Homo sapiens (Human), this protein is Transmembrane protein 150A (TMEM150A).